The sequence spans 315 residues: Protein OPG185 (315 aa).

Positions 1–16 are cleaved as a signal peptide; it reads MARLPILLLLISLVYS. In terms of domain architecture, Ig-like V-type spans 17–121; sequence TPSPQTSKKI…NDTDKVDYEE (105 aa). The Virion surface segment spans residues 17 to 279; sequence TPSPQTSKKI…SNYKTKDFVE (263 aa). A disulfide bridge links Cys34 with Cys103. N-linked (GlcNAc...) asparagine; by host glycosylation is found at Asn37, Asn69, Asn112, and Asn161. Residues 192–202 show a composition bias toward polar residues; that stretch reads INTVSASSGES. The tract at residues 192–214 is disordered; that stretch reads INTVSASSGESTTDETPEPITDK. N-linked (GlcNAc...) asparagine; by host glycosylation is present at Asn254. Residues 280 to 303 form a helical membrane-spanning segment; sequence IFGITALIILSAVAIFCITYYIYN. The Intravirion portion of the chain corresponds to 304–315; that stretch reads KRSRKYKTENKV.

This sequence belongs to the orthopoxvirus OPG185 family. As to quaternary structure, heterodimerizes with OPG040. The heterodimer OPG185-OPG040 interacts with components of the entry fusion complex OPG143 and OPG094. Heterodimer with C3/VPC protein; disulfide-linked. Post-translationally, glycosylated; contains phosphate and sulfate-substituted glycans. O-glycosylation is required for hemagglutination and hemadsorption activities of infected cell membranes.

It is found in the virion membrane. The protein localises to the host membrane. Its function is as follows. Prevents cell to cell fusion by interacting with and directing the viral OPG040 protein on the host plasma membrane. The OPG185-OPG040 complex associates with components of the entry fusion complex (EFC) presumably to avoid superinfection and syncytium formation. Via its interaction with C3/VCP protein, protects the infected cell and probably also the extracellular enveloped virus from complement attack. The polypeptide is Protein OPG185 (OPG185) (Vaccinia virus (strain Tian Tan) (VACV)).